We begin with the raw amino-acid sequence, 83 residues long: Translational regulator CsrA (83 aa).

The protein belongs to the CsrA/RsmA family. As to quaternary structure, homodimer; the beta-strands of each monomer intercalate to form a hydrophobic core, while the alpha-helices form wings that extend away from the core.

It is found in the cytoplasm. Functionally, a translational regulator that binds mRNA to regulate translation initiation and/or mRNA stability. Usually binds in the 5'-UTR at or near the Shine-Dalgarno sequence preventing ribosome-binding, thus repressing translation. Its main target seems to be the major flagellin gene, while its function is anatagonized by FliW. The chain is Translational regulator CsrA from Nocardioides sp. (strain ATCC BAA-499 / JS614).